Reading from the N-terminus, the 433-residue chain is MPSSAQNASTPNTFFTASLAAADPEIADAIKGELGRQQHEIELIASENIVSRAVLEAQGSVMTNKYAEGYPGKRYYGGCEWVDVAETLAIERAKKLFGAQFANVQPNSGSQMNQAVFLALLQPGDTFMGLDLAAGGHLTHGSPVNMSGKWFKAAHYTVRRDDQLIDMDEVAKQAEQVKPKLIIAGGSAYSRPWDFKRFREIADSVGAYFMVDMAHFAGLVAGGVHASPVPHAHVTTTTTHKSLRGPRGGLILTNDEDIAKKINSAIFPGLQGGPLMHVIAAKAVAFKEALQPDFKVYAKNIVENARALAETLRGHGFEIVSGGTDNHLMLVDLRPKGLKGNISERALVRSGLTCNKNGIPFDPEKPFVTSGLRLGTPATTTRGFGVAEFKQVGALIAEVLNAVAQSPDGAAPGVEESVKKRVRELTDRFPIYS.

Residues Leu-132 and 136 to 138 (GHL) contribute to the (6S)-5,6,7,8-tetrahydrofolate site. Lys-241 bears the N6-(pyridoxal phosphate)lysine mark.

It belongs to the SHMT family. Homodimer. It depends on pyridoxal 5'-phosphate as a cofactor.

Its subcellular location is the cytoplasm. The enzyme catalyses (6R)-5,10-methylene-5,6,7,8-tetrahydrofolate + glycine + H2O = (6S)-5,6,7,8-tetrahydrofolate + L-serine. The protein operates within one-carbon metabolism; tetrahydrofolate interconversion. Its pathway is amino-acid biosynthesis; glycine biosynthesis; glycine from L-serine: step 1/1. Catalyzes the reversible interconversion of serine and glycine with tetrahydrofolate (THF) serving as the one-carbon carrier. This reaction serves as the major source of one-carbon groups required for the biosynthesis of purines, thymidylate, methionine, and other important biomolecules. Also exhibits THF-independent aldolase activity toward beta-hydroxyamino acids, producing glycine and aldehydes, via a retro-aldol mechanism. The sequence is that of Serine hydroxymethyltransferase from Afipia carboxidovorans (strain ATCC 49405 / DSM 1227 / KCTC 32145 / OM5) (Oligotropha carboxidovorans).